Here is a 409-residue protein sequence, read N- to C-terminus: Peptidase T (409 aa).

H78 is a Zn(2+) binding site. D80 is an active-site residue. Residue D139 coordinates Zn(2+). Residue E173 is the Proton acceptor of the active site. 3 residues coordinate Zn(2+): E174, D196, and H378.

It belongs to the peptidase M20B family. The cofactor is Zn(2+).

It is found in the cytoplasm. The enzyme catalyses Release of the N-terminal residue from a tripeptide.. Functionally, cleaves the N-terminal amino acid of tripeptides. This chain is Peptidase T, found in Shewanella sediminis (strain HAW-EB3).